The sequence spans 61 residues: Small ribosomal subunit protein uS14B (61 aa).

4 residues coordinate Zn(2+): C24, C27, C40, and C43.

Belongs to the universal ribosomal protein uS14 family. Zinc-binding uS14 subfamily. Part of the 30S ribosomal subunit. Contacts proteins S3 and S10. It depends on Zn(2+) as a cofactor.

Its function is as follows. Binds 16S rRNA, required for the assembly of 30S particles and may also be responsible for determining the conformation of the 16S rRNA at the A site. This chain is Small ribosomal subunit protein uS14B, found in Lacticaseibacillus paracasei (strain ATCC 334 / BCRC 17002 / CCUG 31169 / CIP 107868 / KCTC 3260 / NRRL B-441) (Lactobacillus paracasei).